Here is a 314-residue protein sequence, read N- to C-terminus: MKTIIRYFSFVMGLMLTLPSFAKEKISIMLDWYVNPDHAAIIVAQQKGFFEKNNLEVEIIEPADPALPPKLAAAEKVDLAVSYQPQLYQQVAEGLPLVRVGSLISNPLNSVVVLKKSNLKSLADLKGKKVGYSVSGFEDGLLDTMLHSIGLSNKDVELVNVNWSLSPSLLTGQVDAVIGAFRNFELNQLALEKQEGIAFFPEQYGVPAYDELILVANKNSVTDKKTSAFLTALEQATSYLQAHPNEAWQAFVSYKPNELNTPLNQLAWKDTLPFLANKPRQLDAKRYQQMAEFMQQKGLIPKALALKEYAVEIE.

This sequence belongs to the NMT1/THI5 family.

Its function is as follows. Probably involved in thiamine biosynthesis. In Haemophilus influenzae (strain ATCC 51907 / DSM 11121 / KW20 / Rd), this protein is Putative thiamine biosynthesis protein HI_0357.